A 158-amino-acid chain; its full sequence is Cyclic pyranopterin monophosphate synthase (158 aa).

Substrate contacts are provided by residues Leu76–His78 and Met114–Glu115. The active site involves Asp129.

The protein belongs to the MoaC family. Homohexamer; trimer of dimers.

The enzyme catalyses (8S)-3',8-cyclo-7,8-dihydroguanosine 5'-triphosphate = cyclic pyranopterin phosphate + diphosphate. Its pathway is cofactor biosynthesis; molybdopterin biosynthesis. Its function is as follows. Catalyzes the conversion of (8S)-3',8-cyclo-7,8-dihydroguanosine 5'-triphosphate to cyclic pyranopterin monophosphate (cPMP). The sequence is that of Cyclic pyranopterin monophosphate synthase from Shewanella baltica (strain OS155 / ATCC BAA-1091).